The following is a 447-amino-acid chain: Probable aspartic protease At2g35615 (447 aa).

The first 20 residues, 1 to 20 (MATQILLCFFLFFSVTLSSS), serve as a signal peptide directing secretion. Asn25 is a glycosylation site (N-linked (GlcNAc...) asparagine). One can recognise a Peptidase A1 domain in the interval 85-439 (FFMSITIGTP…DLETRTVSFQ (355 aa)). The active site involves Asp103. Asn251 carries N-linked (GlcNAc...) asparagine glycosylation. Asp326 is a catalytic residue.

It belongs to the peptidase A1 family.

Its subcellular location is the secreted. This is Probable aspartic protease At2g35615 from Arabidopsis thaliana (Mouse-ear cress).